Here is a 502-residue protein sequence, read N- to C-terminus: Lysine--tRNA ligase (502 aa).

Residues E411 and E418 each coordinate Mg(2+).

This sequence belongs to the class-II aminoacyl-tRNA synthetase family. In terms of assembly, homodimer. Requires Mg(2+) as cofactor.

It is found in the cytoplasm. It carries out the reaction tRNA(Lys) + L-lysine + ATP = L-lysyl-tRNA(Lys) + AMP + diphosphate. The protein is Lysine--tRNA ligase of Clostridium kluyveri (strain ATCC 8527 / DSM 555 / NBRC 12016 / NCIMB 10680 / K1).